The sequence spans 281 residues: Dexamethasone-induced Ras-related protein 1 (281 aa).

An S-nitrosocysteine modification is found at Cys11. 31–38 (GSSKVGKT) contributes to the GTP binding site. Residues 53–61 (YTPTIEDFH) carry the Effector region motif. GTP contacts are provided by residues 78–82 (DTSGN) and 145–148 (NKGD). Cys278 carries the post-translational modification Cysteine methyl ester. The S-farnesyl cysteine moiety is linked to residue Cys278. The propeptide at 279 to 281 (VIS) is removed in mature form.

Belongs to the small GTPase superfamily. RasD family. Forms a ternary complex with CAPON and NOS1. Component of a complex, at least composed of APBB1, RASD1/DEXRAS1 and APP. Interacts with APBB1/FE65. In terms of processing, S-nitrosylation stimulates guanine-nucleotide exchange activity. As to expression, expressed in a variety of tissues including heart, cardiovascular tissues, brain, placenta, lung, liver, skeletal muscle, kidney, pancreas, gastrointestinal and reproductive tissues.

It localises to the cell membrane. Its subcellular location is the cytoplasm. The protein resides in the perinuclear region. It is found in the nucleus. In terms of biological role, small GTPase. Negatively regulates the transcription regulation activity of the APBB1/FE65-APP complex via its interaction with APBB1/FE65. The sequence is that of Dexamethasone-induced Ras-related protein 1 (RASD1) from Homo sapiens (Human).